Consider the following 356-residue polypeptide: Homoserine O-acetyltransferase (356 aa).

One can recognise an AB hydrolase-1 domain in the interval 49-337; the sequence is VLICHALTGS…KSTHGHDAFL (289 aa). Ser-143 (nucleophile) is an active-site residue. Arg-212 is a binding site for substrate. Active-site residues include Asp-304 and His-333. Asp-334 serves as a coordination point for substrate.

Belongs to the AB hydrolase superfamily. MetX family. As to quaternary structure, homodimer.

The protein resides in the cytoplasm. It catalyses the reaction L-homoserine + acetyl-CoA = O-acetyl-L-homoserine + CoA. Its pathway is amino-acid biosynthesis; L-methionine biosynthesis via de novo pathway; O-acetyl-L-homoserine from L-homoserine: step 1/1. In terms of biological role, transfers an acetyl group from acetyl-CoA to L-homoserine, forming acetyl-L-homoserine. In Nostoc punctiforme (strain ATCC 29133 / PCC 73102), this protein is Homoserine O-acetyltransferase.